A 384-amino-acid chain; its full sequence is ATP phosphoribosyltransferase regulatory subunit (384 aa).

It belongs to the class-II aminoacyl-tRNA synthetase family. HisZ subfamily. As to quaternary structure, heteromultimer composed of HisG and HisZ subunits.

The protein localises to the cytoplasm. It participates in amino-acid biosynthesis; L-histidine biosynthesis; L-histidine from 5-phospho-alpha-D-ribose 1-diphosphate: step 1/9. Its function is as follows. Required for the first step of histidine biosynthesis. May allow the feedback regulation of ATP phosphoribosyltransferase activity by histidine. This is ATP phosphoribosyltransferase regulatory subunit from Paracidovorax citrulli (strain AAC00-1) (Acidovorax citrulli).